The primary structure comprises 285 residues: Probable E3 ubiquitin-protein ligase IE1 (285 aa).

At 1-201 the chain is on the cytoplasmic side; that stretch reads MASKDSDVRC…LPGYWDRDDR (201 aa). The RING-CH-type zinc finger occupies 124 to 183; that stretch reads SIDEEGKQCWICRDGESLPEARYCNCYGDLQYCHEECLKTWISMSGEKKCKFCQTPYKVN. Residues Cys132, Cys135, Cys147, Cys149, His157, Cys160, Cys173, and Cys176 each coordinate Zn(2+). A helical membrane pass occupies residues 202–222; the sequence is FVFIAGFIGMGTILAGWIASF. Residues 223 to 238 are Extracellular-facing; the sequence is FYLLVVLCGKYFTYKD. A helical membrane pass occupies residues 239–259; sequence VMIVVGGLAIIQVVGLMFSLF. The Cytoplasmic segment spans residues 260–285; the sequence is MYFQIGNLLRQYINYMTETNIDPLRT.

The protein resides in the membrane. It carries out the reaction S-ubiquitinyl-[E2 ubiquitin-conjugating enzyme]-L-cysteine + [acceptor protein]-L-lysine = [E2 ubiquitin-conjugating enzyme]-L-cysteine + N(6)-ubiquitinyl-[acceptor protein]-L-lysine.. The protein operates within protein modification; protein ubiquitination. Functionally, controls the expression of later classes of genes and also of the IE genes (Potential). E3 ubiquitin-protein ligase. E3 ubiquitin ligases accept ubiquitin from an E2 ubiquitin-conjugating enzyme in the form of a thioester and then directly transfer the ubiquitin to targeted substrates. The polypeptide is Probable E3 ubiquitin-protein ligase IE1 (IE1) (Bovine herpesvirus 4 (strain DN-599) (BoHV-4)).